The following is a 129-amino-acid chain: Small ribosomal subunit protein uS11 (129 aa).

This sequence belongs to the universal ribosomal protein uS11 family. As to quaternary structure, part of the 30S ribosomal subunit. Interacts with proteins S7 and S18. Binds to IF-3.

Located on the platform of the 30S subunit, it bridges several disparate RNA helices of the 16S rRNA. Forms part of the Shine-Dalgarno cleft in the 70S ribosome. This Allorhizobium ampelinum (strain ATCC BAA-846 / DSM 112012 / S4) (Agrobacterium vitis (strain S4)) protein is Small ribosomal subunit protein uS11.